The sequence spans 559 residues: MWTNFFKLRLFCCLLAVLMVVVLVVNVTQVEYLDHETVSATFIDSSGQFVSSQVTGISRNPYCGYDQQTLSSQERMEEDSLLAALHQQVPDVGPVPFVKSTDPSSSYFVILNSAAFFKVGSQLEVLVHVQDFQRKPKKYGGDYLQARIHSPKLQAGAVGRVVDYQNGFYKVFFTLLWPGKVKVSVSLVHPSEGIRVLQRLQEDKPDRVYFKSLFRSGRISETTECNVCLPGNLPLCNFTDLYTGEPWFCFKPKKLPCSSRITHFKGGYLKGLLTAAESAFFQSGVNIKMPINSSGPDWVTVIPRRIKETNNLELSQGSGTFPSGYYYKDQWRPRKFKMRQFNDPDNITECLQRKVVHLFGDSTIRQWFEYLTTFVPDLVEFNLGSPKNVGPFLAVDQKHNILLKYRCHGPPIRFTTVFSNELHYVANELNGIVGGKNTVVAIAVWSRFSTFPLEVYIRRLRNIRRAVVRLLDRSPKTVVVIRTANAQELGPEVSLFNSDWYNFQLDTILRRMFSGVGVYLVDAWEMTLAHYLPHKLHPDEVIVKNQLDMFLSFVCPLET.

Residues 1–30 (MWTNFFKLRLFCCLLAVLMVVVLVVNVTQV) form the signal peptide. N-linked (GlcNAc...) asparagine glycosylation is found at asparagine 26, asparagine 237, and asparagine 346.

It belongs to the NXPE family.

It localises to the secreted. This Pongo abelii (Sumatran orangutan) protein is NXPE family member 3 (NXPE3).